Consider the following 288-residue polypeptide: 33 kDa chaperonin (288 aa).

Intrachain disulfides connect Cys-235–Cys-237 and Cys-268–Cys-271.

The protein belongs to the HSP33 family. Under oxidizing conditions two disulfide bonds are formed involving the reactive cysteines. Under reducing conditions zinc is bound to the reactive cysteines and the protein is inactive.

Its subcellular location is the cytoplasm. Functionally, redox regulated molecular chaperone. Protects both thermally unfolding and oxidatively damaged proteins from irreversible aggregation. Plays an important role in the bacterial defense system toward oxidative stress. This chain is 33 kDa chaperonin, found in Streptococcus suis (strain 98HAH33).